A 629-amino-acid chain; its full sequence is MPKAVGIDLGTTNSVIATMEGGRPEVIVNAEGARTTPSVVAYKGDERLVGQIARRQAALNPKATLFEVKRFIGRRWDEVKEEAARMPFTVKEGPGGSVRIEVNGKDLAPEQVSAEVLRKLVADASAKLGEKITDAVITVPAYFDNSQREATKQAGEIAGLNVLRVINEPTAAALAYGLERKGNETVLVFDLGGGTFDVTILELGEGVFEVRSTAGDTHLGGADFDQRIVNWLAEEFRKEHNFDLRKDPQALQRLIEAAERAKIELSNASETTISLPFITFDPETRTPLHLERTLSRAKFEELTADLLRRVRQPVEQALADAKLSASDIDEVILVGGSTRIPAVKRIVKEITGKEPNESVNPDEAVALGAAVQAGIIQGDANLGDIVLVDVTPLTLGVEVKGGMVAPMIPRNTTIPAKKTEIYTTAENNQPGVEIVVLQGERPMAADNKSLGRFKLEGIPPMPAGRPQIEVTFDIDANGILHVTAKEKTSGKEASIRIENTTTLDKSDVERMVKEAEQNAEADRKRRERVEKRNNLDSLRVQALGQLEENQSAPQDAKDRLKAAADEAEEAVRSDDDSRIERAQKQLEEAMRSFMTAAQSGSQNQAGQGAQTQTGRQEDDVIDADFKPAE.

Position 195 is a phosphothreonine; by autocatalysis (Thr195). Disordered regions lie at residues 514-533 (EAEQ…EKRN) and 543-629 (LGQL…KPAE). Residues 555-590 (DAKDRLKAAADEAEEAVRSDDDSRIERAQKQLEEAM) show a composition bias toward basic and acidic residues. Positions 595-614 (TAAQSGSQNQAGQGAQTQTG) are enriched in low complexity. The segment covering 615-629 (RQEDDVIDADFKPAE) has biased composition (basic and acidic residues).

It belongs to the heat shock protein 70 family.

Its function is as follows. Acts as a chaperone. This Deinococcus geothermalis (strain DSM 11300 / CIP 105573 / AG-3a) protein is Chaperone protein DnaK.